Here is a 496-residue protein sequence, read N- to C-terminus: Serine/threonine-protein kinase Sgk3 (496 aa).

A PX domain is found at 12–124; it reads SCPSVSIPSS…AFLQMDSPRH (113 aa). Residues 121-157 are disordered; sequence SPRHQSDPSEDEDERSTPKPHSTSRNINLGPTGNPHA. Serine 126 and serine 129 each carry phosphoserine. Polar residues predominate over residues 139-151; it reads KPHSTSRNINLGP. A Protein kinase domain is found at 162-464; that stretch reads FDFLKVIGKG…EETVPYSVCV (303 aa). Residues 168–176 and lysine 191 each bind ATP; that span reads IGKGSFGKV. Positions 195–205 match the Nuclear localization signal motif; it reads KKIVLNRKEQK. Aspartate 286 functions as the Proton acceptor in the catalytic mechanism. Threonine 320 bears the Phosphothreonine; by PDPK1 mark. Residues 420 to 496 form the AGC-kinase C-terminal domain; the sequence is ESLSWTDLVQ…YAPPSEDLFL (77 aa). Serine 486 is subject to Phosphoserine.

It belongs to the protein kinase superfamily. AGC Ser/Thr protein kinase family. As to quaternary structure, interacts with GSK3B and FLII. Interacts with PDPK1 in a phosphorylation-dependent manner. In terms of processing, activated by phosphorylation on Ser-486 by an unknown kinase (may be mTORC2 but not confirmed), transforming it into a substrate for PDPK1 which then phosphorylates it on Thr-320.

Its subcellular location is the cytoplasmic vesicle. It is found in the early endosome. The protein resides in the recycling endosome. It catalyses the reaction L-seryl-[protein] + ATP = O-phospho-L-seryl-[protein] + ADP + H(+). It carries out the reaction L-threonyl-[protein] + ATP = O-phospho-L-threonyl-[protein] + ADP + H(+). Its activity is regulated as follows. Two specific sites, one in the kinase domain (Thr-320) and the other in the C-terminal regulatory region (Ser-486), need to be phosphorylated for its full activation. Serine/threonine-protein kinase which is involved in the regulation of a wide variety of ion channels, membrane transporters, cell growth, proliferation, survival and migration. Up-regulates Na(+) channels: SCNN1A/ENAC and SCN5A, K(+) channels: KCNA3/KV1.3, KCNE1, KCNQ1 and KCNH2/HERG, epithelial Ca(2+) channels: TRPV5 and TRPV6, chloride channel: BSND, creatine transporter: SLC6A8, Na(+)/dicarboxylate cotransporter: SLC13A2/NADC1, Na(+)-dependent phosphate cotransporter: SLC34A2/NAPI-2B, amino acid transporters: SLC1A5/ASCT2 and SLC6A19, glutamate transporters: SLC1A3/EAAT1, SLC1A6/EAAT4 and SLC1A7/EAAT5, glutamate receptors: GRIA1/GLUR1 and GRIK2/GLUR6, Na(+)/H(+) exchanger: SLC9A3/NHE3, and the Na(+)/K(+) ATPase. Plays a role in the regulation of renal tubular phosphate transport and bone density. Phosphorylates NEDD4L and GSK3B. Positively regulates ER transcription activity through phosphorylation of FLII. Negatively regulates the function of ITCH/AIP4 via its phosphorylation and thereby prevents CXCR4 from being efficiently sorted to lysosomes. The chain is Serine/threonine-protein kinase Sgk3 (Sgk3) from Rattus norvegicus (Rat).